The following is a 935-amino-acid chain: Peptidyl-glycine alpha-amidating monooxygenase A (935 aa).

An N-terminal signal peptide occupies residues 1–36 (MASLSSSFLVLFLLFQNSCYCFRSPLSVFKRYEEST). The segment at 1 to 390 (MASLSSSFLV…KREEEEVLDQ (390 aa)) is peptidylglycine alpha-hydroxylating monooxygenase. Topologically, residues 37–825 (RSLSNDCLGT…VQESSAGVSF (789 aa)) are intragranular. Cystine bridges form between C43–C182, C77–C122, C110–C127, C223–C330, and C289–C311. 2 residues coordinate Cu(2+): H103 and H104. Residues H168, H238, H240, and M310 each contribute to the Cu(2+) site. Residues 362–385 (HGHHHTEAEPEKNTGLQQPKREEE) are disordered. Positions 391-712 (DVHLEEDTDW…SPSKAEHRSV (322 aa)) are peptidyl-alpha-hydroxyglycine alpha-amidating lyase. Residue R426 coordinates a protein. NHL repeat units follow at residues 463 to 504 (SKVL…LGAG), 512 to 557 (LGRA…FSPN), and 565 to 609 (GEET…FHAE). Intrachain disulfides connect C526-C547 and C594-C605. Residues Y546 and R598 each coordinate a protein. N658 carries N-linked (GlcNAc...) asparagine glycosylation. The NHL 4 repeat unit spans residues 662-705 (GDILDTFIPARKNFDMPHDIAAADDGTVYVGDAHANAVWKFSPS). Basic and acidic residues predominate over residues 728–751 (FETHIRSRPKTNESVEKQTQEKQQ). Disordered regions lie at residues 728-764 (FETH…TQEK) and 778-812 (QEKQ…TQEK). Residue N739 is glycosylated (N-linked (GlcNAc...) asparagine). Positions 755 to 764 (NSAGVSTQEK) are enriched in polar residues. A helical transmembrane segment spans residues 826–846 (VLIITLLIIPIAVLIAIAIFI). The Cytoplasmic segment spans residues 847–935 (RWRKVRMYGG…PIPPAPVSSS (89 aa)). The disordered stretch occupies residues 896 to 935 (KGFDRLSTEGSDQEKDDDDGSDSEEEYSAPPIPPAPVSSS). Residues 909–922 (EKDDDDGSDSEEEY) are compositionally biased toward acidic residues. The span at 925–935 (PPIPPAPVSSS) shows a compositional bias: pro residues.

In the C-terminal section; belongs to the peptidyl-alpha-hydroxyglycine alpha-amidating lyase family. It in the N-terminal section; belongs to the copper type II ascorbate-dependent monooxygenase family. As to quaternary structure, monomer. Zn(2+) is required as a cofactor. Cu(2+) serves as cofactor.

The protein resides in the cytoplasmic vesicle. The protein localises to the secretory vesicle membrane. It carries out the reaction a [peptide]-C-terminal glycine + 2 L-ascorbate + O2 = a [peptide]-C-terminal (2S)-2-hydroxyglycine + 2 monodehydro-L-ascorbate radical + H2O. It catalyses the reaction a [peptide]-C-terminal (2S)-2-hydroxyglycine = a [peptide]-C-terminal amide + glyoxylate. Functionally, bifunctional enzyme that catalyzes amidation of the C-terminus of proteins. Alpha-amidation is present at the C-terminus of many endocrine hormones and neuropeptides and is required for their activity. C-terminal amidation also takes place in response to protein fragmentation triggered by oxidative stress, promoting degradation of amidated protein fragments by the proteasome. Alpha-amidation involves two sequential reactions, both of which are catalyzed by separate catalytic domains of the enzyme. The first step, catalyzed by peptidyl alpha-hydroxylating monooxygenase (PHM) domain, is the copper-, ascorbate-, and O2- dependent stereospecific hydroxylation (with S stereochemistry) at the alpha-carbon (C-alpha) of the C-terminal glycine of the peptidylglycine substrate. The second step, catalyzed by the peptidylglycine amidoglycolate lyase (PAL) domain, is the zinc-dependent cleavage of the N-C-alpha bond, producing the alpha-amidated peptide and glyoxylate. The protein is Peptidyl-glycine alpha-amidating monooxygenase A (pam-a) of Xenopus laevis (African clawed frog).